The following is a 240-amino-acid chain: Ribonuclease HII (240 aa).

The 192-residue stretch at 31-222 folds into the RNase H type-2 domain; it reads RLIAGVDEAG…VRRALGLETA (192 aa). A divalent metal cation-binding residues include D37, E38, and D130.

This sequence belongs to the RNase HII family. Requires Mn(2+) as cofactor. It depends on Mg(2+) as a cofactor.

The protein resides in the cytoplasm. It carries out the reaction Endonucleolytic cleavage to 5'-phosphomonoester.. In terms of biological role, endonuclease that specifically degrades the RNA of RNA-DNA hybrids. The polypeptide is Ribonuclease HII (Xanthomonas campestris pv. campestris (strain B100)).